Here is a 174-residue protein sequence, read N- to C-terminus: Amino-acid acetyltransferase (174 aa).

The N-acetyltransferase domain occupies 10 to 148; sequence PVVRRARTSD…VFDEMCRSYD (139 aa).

It belongs to the acetyltransferase family. As to quaternary structure, homodimer and homotetramer.

It carries out the reaction L-glutamate + acetyl-CoA = N-acetyl-L-glutamate + CoA + H(+). The protein operates within amino-acid biosynthesis; L-arginine biosynthesis; N(2)-acetyl-L-ornithine from L-glutamate: step 1/4. With respect to regulation, inhibited by L-arginine. Its function is as follows. Catalyzes the conversion of L-glutamate to alpha-N-acetyl-L-glutamate. L-glutamine is a significantly better substrate compared to L-glutamate. This Mycobacterium tuberculosis (strain ATCC 25618 / H37Rv) protein is Amino-acid acetyltransferase (argA).